A 340-amino-acid chain; its full sequence is Major histocompatibility complex class I-related protein 1 (340 aa).

Residues 1 to 22 (MGELTAFLLPLIIVLMVKHSNS) form the signal peptide. The segment at 23–109 (RTHSLRYFRL…KRLQRHYNHS (87 aa)) is alpha-1. Residues 23-201 (RTHSLRYFRL…EYGKDTLQRT (179 aa)) are antigen-binding cleft. Topologically, residues 23-302 (RTHSLRYFRL…QESEAIPLVM (280 aa)) are extracellular. The 8-(9H-purin-6-yl)-2-oxa-8-azabicyclo[3.3.1]nona-3,6-diene-4,6-dicarbaldehyde site is built by tyrosine 29 and arginine 31. The 5-(2-oxoethylideneamino)-6-(D-ribitylamino)uracil site is built by arginine 31, serine 46, and lysine 65. Positions 31, 46, and 65 each coordinate 5-(2-oxopropylideneamino)-6-(D-ribitylamino)uracil. Residues arginine 31, serine 46, and lysine 65 each coordinate 7-hydroxy-6-methyl-8-(1-D-ribityl)lumazine. 8-(9H-purin-6-yl)-2-oxa-8-azabicyclo[3.3.1]nona-3,6-diene-4,6-dicarbaldehyde-binding residues include lysine 65 and histidine 80. Lysine 65 contributes to the 2-amino-4-oxopteridine-6-carbaldehyde binding site. Lysine 65 contributes to the pyridoxal binding site. N-linked (GlcNAc...) asparagine glycosylation is present at asparagine 107. Residues 110–201 (GSHTYQRMIG…EYGKDTLQRT (92 aa)) are alpha-2. Residue arginine 116 participates in 8-(9H-purin-6-yl)-2-oxa-8-azabicyclo[3.3.1]nona-3,6-diene-4,6-dicarbaldehyde binding. 5-(2-oxoethylideneamino)-6-(D-ribitylamino)uracil is bound by residues arginine 116, tyrosine 174, and glutamine 175. Residues arginine 116, tyrosine 174, and glutamine 175 each coordinate 5-(2-oxopropylideneamino)-6-(D-ribitylamino)uracil. 3 residues coordinate 7-hydroxy-6-methyl-8-(1-D-ribityl)lumazine: arginine 116, tyrosine 174, and glutamine 175. Intrachain disulfides connect cysteine 120-cysteine 183 and cysteine 222-cysteine 278. The tract at residues 202–293 (EPPLVRVNRK…GVHVVLQVPQ (92 aa)) is alpha-3. The Ig-like C1-type domain maps to 203-282 (PPLVRVNRKE…SNLYSCHVEH (80 aa)). Residues 294–302 (ESEAIPLVM) are connecting peptide. The chain crosses the membrane as a helical span at residues 303–323 (KAVSGSIVFVIVLAGVGVLVW). Residues 324–340 (RRRPREQNGAVYLPTPD) are Cytoplasmic-facing.

Belongs to the MHC class I family. In terms of assembly, heterotrimer that consists of MR1, B2M and metabolite antigen. Major classes of metabolite ligands presented by MR1 include riboflavin-related antigens, pyrimidines and ribityl lumazines, nucleobase adducts and folate derivatives. Forms reversible covalent Schiff base complexes with microbial pyrimidine-based metabolite, which serves as a molecular switch triggering complete folding, stable association with B2M and translocation of the ternary complex from endoplasmic reticulum to the plasma membrane. Alternatively, forms non-Schiff base complexes with ribityl lumazines. On antigen-presenting cells, the ternary complex interacts with TCR on MR1-restricted T cells. Interacts with TAPBP and TAPBPL chaperones in the endoplasmic reticulum. TAPBP associated or not with MHC class I peptide loading complex binds ligand-free MR1 or MR1-B2M complex, providing for stable MR1 pools ready for metabolite antigen processing. TAPBPL interacts with MR1 in a ligand-independent way; this interaction may stabilize MR1 pool and facilitate ligand loading and dissociation. Structurally, MR1-B2M heterodimer adopts a topology similar to classical MHC class I molecules, with alpha-1 and alpha-2 domains of MR1 forming the antigen-binding cleft composed of two alpha-helices resting on a floor of 7-stranded anti-parallel beta-pleated sheet. MR1-B2M heterodimer (via alpha-helices) interacts with TCR (via CDR domains). N-glycosylated.

Its subcellular location is the cell membrane. It localises to the endoplasmic reticulum membrane. The protein resides in the golgi apparatus membrane. The protein localises to the early endosome membrane. It is found in the late endosome membrane. In terms of biological role, antigen-presenting molecule specialized in displaying microbial pyrimidine-based metabolites to alpha-beta T cell receptors (TCR) on innate-type mucosal-associated invariant T (MAIT) cells. In complex with B2M preferentially presents riboflavin-derived metabolites to semi-invariant TCRs on MAIT cells, guiding immune surveillance of the microbial metabolome at mucosal epithelial barriers. Signature pyrimidine-based microbial antigens are generated via non-enzymatic condensation of metabolite intermediates of the riboflavin pathway with by-products arising from other metabolic pathways such as glycolysis. Typical potent antigenic metabolites are 5-(2-oxoethylideneamino)-6-D-ribitylaminouracil (5-OE-RU) and 5-(2-oxopropylideneamino)-6-D-ribitylaminouracil (5-OP-RU), products of condensation of 5-amino-6-D-ribityaminouracil (5-A-RU) with glyoxal or methylglyoxal by-products, respectively. May present microbial antigens to various MAIT cell subsets, providing for unique recognition of diverse microbes, including pathogens that do not synthesize riboflavin. Upon antigen recognition, elicits rapid innate-type MAIT cell activation to eliminate pathogenic microbes by directly killing infected cells. During T cell development, drives thymic selection and post-thymic terminal differentiation of MAIT cells in a process dependent on commensal microflora. Acts as an immune sensor of cancer cell metabolome. May present a tumor-specific or -associated metabolite essential for cancer cell survival to a pan-cancer TCR on a non-MAIT CD8-positive T cell clone, triggering T cell-mediated killing of a wide range of cancer cell types. May present tumor-enriched pyridoxal and pyridoxal 5'-phosphate antigens, enabling preferential recognition of cancer cells. Presents nucleobase carbonyl adducts generated during oxidative stress. Captures M3Ade, a nucleobase adduct composed of one adenine modified by a malondialdehyde trimer, for recognition by MR1-restricted T cell clones expressing a polyclonal TCR repertoire. The polypeptide is Major histocompatibility complex class I-related protein 1 (Pongo abelii (Sumatran orangutan)).